Reading from the N-terminus, the 360-residue chain is Aminomethyltransferase (360 aa).

The protein belongs to the GcvT family. In terms of assembly, the glycine cleavage system is composed of four proteins: P, T, L and H.

It carries out the reaction N(6)-[(R)-S(8)-aminomethyldihydrolipoyl]-L-lysyl-[protein] + (6S)-5,6,7,8-tetrahydrofolate = N(6)-[(R)-dihydrolipoyl]-L-lysyl-[protein] + (6R)-5,10-methylene-5,6,7,8-tetrahydrofolate + NH4(+). Functionally, the glycine cleavage system catalyzes the degradation of glycine. The protein is Aminomethyltransferase of Pseudomonas putida (strain ATCC 47054 / DSM 6125 / CFBP 8728 / NCIMB 11950 / KT2440).